The chain runs to 75 residues: Exodeoxyribonuclease 7 small subunit (75 aa).

This sequence belongs to the XseB family. In terms of assembly, heterooligomer composed of large and small subunits.

The protein localises to the cytoplasm. It catalyses the reaction Exonucleolytic cleavage in either 5'- to 3'- or 3'- to 5'-direction to yield nucleoside 5'-phosphates.. Its function is as follows. Bidirectionally degrades single-stranded DNA into large acid-insoluble oligonucleotides, which are then degraded further into small acid-soluble oligonucleotides. This chain is Exodeoxyribonuclease 7 small subunit, found in Chlamydia felis (strain Fe/C-56) (Chlamydophila felis).